We begin with the raw amino-acid sequence, 553 residues long: ATP synthase subunit alpha (553 aa).

Residue 173–180 (GDRQTGKT) coordinates ATP. The disordered stretch occupies residues 527–553 (EALDPSAVEREEIAVHHRKPSDETAGH). A compositionally biased stretch (basic and acidic residues) spans 533-553 (AVEREEIAVHHRKPSDETAGH).

This sequence belongs to the ATPase alpha/beta chains family. F-type ATPases have 2 components, CF(1) - the catalytic core - and CF(0) - the membrane proton channel. CF(1) has five subunits: alpha(3), beta(3), gamma(1), delta(1), epsilon(1). CF(0) has three main subunits: a(1), b(2) and c(9-12). The alpha and beta chains form an alternating ring which encloses part of the gamma chain. CF(1) is attached to CF(0) by a central stalk formed by the gamma and epsilon chains, while a peripheral stalk is formed by the delta and b chains.

Its subcellular location is the cell membrane. The enzyme catalyses ATP + H2O + 4 H(+)(in) = ADP + phosphate + 5 H(+)(out). In terms of biological role, produces ATP from ADP in the presence of a proton gradient across the membrane. The alpha chain is a regulatory subunit. This Parafrankia sp. (strain EAN1pec) protein is ATP synthase subunit alpha.